The primary structure comprises 718 residues: Telomeric repeat-binding factor 2 (718 aa).

2 disordered regions span residues M1 to D22 and N219 to E286. 2 stretches are compositionally biased toward basic and acidic residues: residues A8–D22 and N219–R228. A TRFH dimerization region spans residues E24 to S220. Tandem repeats lie at residues G257–A269, G270–T282, G283–V295, R296–Q308, G309–M321, G322–L334, G335–V347, R348–V360, G361–A373, R374–P386, G387–V399, R400–V412, R413–V425, R426–A438, and G439–T451. The segment at G257–T451 is 15 X 13 AA approximate tandem repeats. Disordered stretches follow at residues T342 to P455 and F524 to E641. Residues A405 to V425 are compositionally biased toward basic and acidic residues. Positions P533–S543 are enriched in polar residues. Residues R545 to K550 carry the Nuclear localization signal motif. A compositionally biased stretch (low complexity) spans S584 to S595. The span at P615 to Y630 shows a compositional bias: polar residues. Residues K664–I717 form the HTH myb-type domain. The H-T-H motif DNA-binding region spans W688 to K713.

In terms of assembly, homodimer. Component of the shelterin complex (telosome). Interacts with TERF2IP/RAP1. Highly expressed in embryo.

It localises to the nucleus. It is found in the chromosome. The protein localises to the telomere. Its function is as follows. Binds the telomeric double-stranded 5'-TTAGGG-3' repeat and plays a central role in telomere maintenance and protection against end-to-end fusion of chromosomes. In addition to its telomeric DNA-binding role, required to recruit a number of factors and enzymes required for telomere protection, including the shelterin complex, TERF2IP/RAP1 and DCLRE1B/Apollo. Component of the shelterin complex (telosome) that is involved in the regulation of telomere length and protection. Shelterin associates with arrays of double-stranded 5'-TTAGGG-3' repeats added by telomerase and protects chromosome ends; without its protective activity, telomeres are no longer hidden from the DNA damage surveillance and chromosome ends are inappropriately processed by DNA repair pathways. Together with DCLRE1B/Apollo, plays a key role in telomeric loop (T loop) formation by generating 3' single-stranded overhang at the leading end telomeres: T loops have been proposed to protect chromosome ends from degradation and repair. Required both to recruit DCLRE1B/Apollo to telomeres and activate the exonuclease activity of DCLRE1B/Apollo. Together with DCLRE1B/Apollo, required to control the amount of DNA topoisomerase (TOP1, TOP2A and TOP2B) needed for telomere replication during fork passage and prevent aberrant telomere topology. Recruits TERF2IP/RAP1 to telomeres, thereby participating in to repressing homology-directed repair (HDR), which can affect telomere length. In Gallus gallus (Chicken), this protein is Telomeric repeat-binding factor 2 (TERF2).